Consider the following 201-residue polypeptide: tRNA (guanine-N(7)-)-methyltransferase (201 aa).

S-adenosyl-L-methionine-binding residues include Glu33, Glu58, Asp85, and Asp106. Residue Asp106 is part of the active site. Substrate-binding positions include Lys110, Asp142, and 180 to 183 (TTYE).

The protein belongs to the class I-like SAM-binding methyltransferase superfamily. TrmB family.

It carries out the reaction guanosine(46) in tRNA + S-adenosyl-L-methionine = N(7)-methylguanosine(46) in tRNA + S-adenosyl-L-homocysteine. It functions in the pathway tRNA modification; N(7)-methylguanine-tRNA biosynthesis. Catalyzes the formation of N(7)-methylguanine at position 46 (m7G46) in tRNA. This Mesomycoplasma hyopneumoniae (strain 232) (Mycoplasma hyopneumoniae) protein is tRNA (guanine-N(7)-)-methyltransferase.